The primary structure comprises 450 residues: Probable ECA polymerase (450 aa).

A run of 11 helical transmembrane segments spans residues 6–26, 37–57, 63–83, 118–138, 155–175, 181–201, 207–227, 228–248, 341–361, 378–398, and 410–430; these read FSGLFVVWLLCTLFIATLTWF, VFFSLLFLLTFFFGFPLTSVL, VGVAPPEILLQALLSAGCFYA, VILMGVALVSVGIFFMHNGFL, GVALKRFFYFFIPAMLVVYFL, AWLFFLVSTVAFGLLTYMIVG, IIIAFAIFLFIGIIRGWISLW, MLAAAGVLGIVGMFWLALKRY, LVVMGGALFIPLGAIVVGLII, YKAAILHSFCFGAIFNMIVLA, and VFFIVVFGACLMIAKLLYWLF.

This sequence belongs to the WzyE family. In terms of assembly, probably part of a complex composed of WzxE, WzyE and WzzE.

It is found in the cell inner membrane. It participates in bacterial outer membrane biogenesis; enterobacterial common antigen biosynthesis. Its function is as follows. Probably involved in the polymerization of enterobacterial common antigen (ECA) trisaccharide repeat units. This chain is Probable ECA polymerase, found in Escherichia coli O17:K52:H18 (strain UMN026 / ExPEC).